The sequence spans 301 residues: Nucleosome assembly protein 1;3 (301 aa).

Positions 15-69 form a coiled coil; sequence VETLKNKLQALAEQHVDVLESLAPVVRKRVDVLIEIQSQHDELEAKFLEEKAALE. The short motif at 36–51 is the Nuclear export signal element; it reads LAPVVRKRVDVLIEIQ. The interval 278-301 is disordered; it reads DEDYGASWVDDEEDDDDEYSDEEA.

Belongs to the nucleosome assembly protein (NAP) family.

It is found in the nucleus. It localises to the cytoplasm. Its function is as follows. May modulate chromatin structure by regulation of nucleosome assembly/disassembly. This is Nucleosome assembly protein 1;3 (NAP1;3) from Oryza sativa subsp. japonica (Rice).